The sequence spans 162 residues: Cyanate hydratase (162 aa).

Residues R102, E105, and S128 contribute to the active site.

This sequence belongs to the cyanase family.

The catalysed reaction is cyanate + hydrogencarbonate + 3 H(+) = NH4(+) + 2 CO2. Its function is as follows. Catalyzes the reaction of cyanate with bicarbonate to produce ammonia and carbon dioxide. The protein is Cyanate hydratase of Mycosarcoma maydis (Corn smut fungus).